Reading from the N-terminus, the 938-residue chain is Protein NLP3 (938 aa).

Disordered regions lie at residues 1–26 (MEVDPSSSLPGAGEGGGGGIGGGGGD) and 557–597 (LADD…KAEK). A compositionally biased stretch (gly residues) spans 12–26 (AGEGGGGGIGGGGGD). Basic and acidic residues predominate over residues 580 to 597 (SLHKSNKPPERRRGKAEK). Positions 585–666 (NKPPERRRGK…IESVQGSDAA (82 aa)) constitute an RWP-RK domain. Positions 640-662 (SRKINKVNRSLSKLKQVIESVQG) form a coiled coil. Residues 743–769 (DKASHSRSSSGEGSINSRTSEASCHGS) form a disordered region. Residues 748–762 (SRSSSGEGSINSRTS) show a composition bias toward low complexity. The region spanning 847-926 (TVTIKASFKE…HVIRLLVSDV (80 aa)) is the PB1 domain.

It localises to the nucleus. Probable transcription factor. In Oryza sativa subsp. japonica (Rice), this protein is Protein NLP3 (NLP3).